Reading from the N-terminus, the 61-residue chain is MAKKSMIIRALRKPKYKTRQNNRCKLCGRPRGYLRDFCMCRICFRKYASQGLIPGVSKSSW.

Residues Cys24, Cys27, Cys40, and Cys43 each coordinate Zn(2+).

This sequence belongs to the universal ribosomal protein uS14 family. Zinc-binding uS14 subfamily. In terms of assembly, part of the 30S ribosomal subunit. Contacts proteins S3 and S10. Zn(2+) serves as cofactor.

Functionally, binds 16S rRNA, required for the assembly of 30S particles and may also be responsible for determining the conformation of the 16S rRNA at the A site. This Borrelia garinii subsp. bavariensis (strain ATCC BAA-2496 / DSM 23469 / PBi) (Borreliella bavariensis) protein is Small ribosomal subunit protein uS14.